The following is a 372-amino-acid chain: Ciliary neurotrophic factor receptor subunit alpha (372 aa).

An N-terminal signal peptide occupies residues 1–22 (MAASVPWACCAVLAAAAAAVYT). Residues 27–104 (PQEAPHVQYE…WHLRHQVLLH (78 aa)) enclose the Ig-like C2-type domain. Cysteines 46 and 89 form a disulfide. 5 N-linked (GlcNAc...) asparagine glycosylation sites follow: N60, N70, N142, N190, and N261. Fibronectin type-III domains are found at residues 108–205 (PPRE…VKPD) and 206–306 (PPEN…TEEP). The WSXWS motif motif lies at 290-294 (WSDWS). The segment at 301 to 339 (PWTEEPRHLTTEAQAPETTTSTTSSLAPPPTTKICDPGE) is disordered. Residues 311–326 (TEAQAPETTTSTTSSL) are compositionally biased toward low complexity. S342 carries the GPI-anchor amidated serine lipid modification. Positions 343 to 372 (GGGPSIPFLTSVPVTLVLAAAAATANNLLI) are cleaved as a propeptide — removed in mature form.

This sequence belongs to the type I cytokine receptor family. Type 3 subfamily. Forms a heterotrimer with LIFR and IL6ST. Interacts with heterodimeric neurotropic cytokine composed of CLCF1/CLC and CRLF1/CLF-1. Either alone or in complex with the heterodimer CLCF1-CRLF1 interacts with SORL1; this interaction may promote internalization and lysosomal degradation. As to expression, nervous system.

Its subcellular location is the cell membrane. Its function is as follows. Binds to CNTF. The alpha subunit provides the receptor specificity. The polypeptide is Ciliary neurotrophic factor receptor subunit alpha (Cntfr) (Rattus norvegicus (Rat)).